The primary structure comprises 169 residues: Small ribosomal subunit protein uS5 (169 aa).

Residues 14–77 (LQEKLVAVRR…EQARKNMRKV (64 aa)) form the S5 DRBM domain.

Belongs to the universal ribosomal protein uS5 family. Part of the 30S ribosomal subunit. Contacts proteins S4 and S8.

With S4 and S12 plays an important role in translational accuracy. In terms of biological role, located at the back of the 30S subunit body where it stabilizes the conformation of the head with respect to the body. This Methylococcus capsulatus (strain ATCC 33009 / NCIMB 11132 / Bath) protein is Small ribosomal subunit protein uS5.